We begin with the raw amino-acid sequence, 293 residues long: MYEEMDSLIEKASILIEALPYIQKLYGKTVVIKYGGNAMINEKLKNWVMEDITLLKYIGVNPIVVHGGGPDINSVLKKLNVESQFVNGLRVTDMQTMEVAQMVLVGKTNKELVSMLNQKGGKAIGICGIDGNLIQARKHYEYVNGEKIDLGYVGEVVSINAKVLEMLAKDEYIPVVAPIGVGEDGTSYNINADTVAAEIAKAIKAEKLMFMTDVEGLKYDKNSKKIISAISADEVLKMIEEGKIDGGMIPKVLGCIDALKHGVNRTHILDGRIPHCILLEIFTDKGIGTMIHL.

Substrate contacts are provided by residues 68–69 (GG), Arg-90, and Asn-189.

This sequence belongs to the acetylglutamate kinase family. ArgB subfamily.

Its subcellular location is the cytoplasm. The enzyme catalyses N-acetyl-L-glutamate + ATP = N-acetyl-L-glutamyl 5-phosphate + ADP. It participates in amino-acid biosynthesis; L-arginine biosynthesis; N(2)-acetyl-L-ornithine from L-glutamate: step 2/4. Its function is as follows. Catalyzes the ATP-dependent phosphorylation of N-acetyl-L-glutamate. The sequence is that of Acetylglutamate kinase from Caldicellulosiruptor bescii (strain ATCC BAA-1888 / DSM 6725 / KCTC 15123 / Z-1320) (Anaerocellum thermophilum).